Consider the following 87-residue polypeptide: Small polypeptide ROTUNDIFOLIA LIKE 2 (87 aa).

A helical transmembrane segment spans residues 19-35 (LIPHTSHYILQLVYLHL). A required for DVL/RTFL small polypeptide activity region spans residues 56-87 (GQMGRLNRAFREKRARFYIFRRCVIMLLRWSD).

Belongs to the DVL/RTFL small polypeptides family.

It is found in the cell membrane. Its function is as follows. Small polypeptide acting as a regulatory molecule which coordinates cellular responses required for differentiation, growth and development, probably by restricting polar cell proliferation in lateral organs. In Oryza sativa subsp. japonica (Rice), this protein is Small polypeptide ROTUNDIFOLIA LIKE 2.